The sequence spans 323 residues: tRNA U34 carboxymethyltransferase (323 aa).

Carboxy-S-adenosyl-L-methionine is bound by residues Lys91, Trp105, Lys110, Gly130, 152-154 (DPT), 181-182 (IE), Met196, Tyr200, and Arg315.

The protein belongs to the class I-like SAM-binding methyltransferase superfamily. CmoB family. Homotetramer.

It carries out the reaction carboxy-S-adenosyl-L-methionine + 5-hydroxyuridine(34) in tRNA = 5-carboxymethoxyuridine(34) in tRNA + S-adenosyl-L-homocysteine + H(+). Functionally, catalyzes carboxymethyl transfer from carboxy-S-adenosyl-L-methionine (Cx-SAM) to 5-hydroxyuridine (ho5U) to form 5-carboxymethoxyuridine (cmo5U) at position 34 in tRNAs. The protein is tRNA U34 carboxymethyltransferase of Shigella dysenteriae serotype 1 (strain Sd197).